Consider the following 368-residue polypeptide: N-acetylneuraminate epimerase (368 aa).

The first 19 residues, 1-19 (MNKTITALAIMMASFAANA), serve as a signal peptide directing secretion. Kelch repeat units lie at residues 40–84 (TVYI…AFID), 86–137 (NLYV…FVHN), 139–173 (KAYVTGGVNQNIFNGYFEDLNEAGKDSTAVDKINA), 174–219 (YYFD…VNKG), 222–265 (TWLI…VAGG), 287–336 (ENYQ…PWNN), and 338–367 (LLIIGGETAGGKAVTDSVLISVKDNKVTVQ). E228 acts as the Proton acceptor in catalysis.

This sequence belongs to the NanM family. Homodimer.

It localises to the periplasm. It catalyses the reaction N-acetyl-alpha-neuraminate = N-acetyl-beta-neuraminate. In terms of biological role, converts alpha-N-acetylneuranimic acid (Neu5Ac) to the beta-anomer, accelerating the equilibrium between the alpha- and beta-anomers. Probably facilitates sialidase-negative bacteria to compete successfully for limited amounts of extracellular Neu5Ac, which is likely taken up in the beta-anomer. In addition, the rapid removal of sialic acid from solution might be advantageous to the bacterium to damp down host responses. This is N-acetylneuraminate epimerase from Shigella boydii serotype 4 (strain Sb227).